The chain runs to 431 residues: MRGLIPDHMLERGRTVLDSYREPVERLLSERRMPEEGWPDDVIATFLWELSRMDTDKDPKAARIGEREARVASRLAEESVFGFCHGVGRSGTLVDPQPKAPGASIMYALTNRLVTDFLRRLGFRIEGAFVVPGATGLSIALCLSALGEGEEVIYPYAAHKSPIKAVRLAGFGMRVVDTEIEGDRIVVDPGDVEEALERSESPAAVLSTLTFFPPRSSDPLPEIAELCEEYGVPHVVNAAYGIQHEQYRDLLNRAIKRGRVDVVVSSTDKNLLTPVGGGIVYAPDEETLREVSRAYPGRASAAPVAHALISLLSLGMKGYRRLMRRQKECKALLDELLEDLEARRDDVRVLDVDNPIASAVAVEGHDPVDLAARLYVRRVTGPRGVRADDPFGTSRLRGYHSNYITINAAIGVREEDVKTAVERLERELEGE.

The tetramerization stretch occupies residues 1-36 (MRGLIPDHMLERGRTVLDSYREPVERLLSERRMPEE). Arginine 67 serves as a coordination point for pyridoxal 5'-phosphate. Positions 88-98 (GRSGTLVDPQP) are phosphate loop (P-loop). Residues arginine 89, serine 90, and glutamine 97 each contribute to the substrate site. N6-(pyridoxal phosphate)lysine is present on lysine 269. Arginine 298 is a binding site for substrate.

This sequence belongs to the SepSecS family. In terms of assembly, homotetramer. It depends on pyridoxal 5'-phosphate as a cofactor.

It carries out the reaction O-phospho-L-seryl-tRNA(Sec) + selenophosphate + H2O = L-selenocysteinyl-tRNA(Sec) + 2 phosphate. It participates in aminoacyl-tRNA biosynthesis; selenocysteinyl-tRNA(Sec) biosynthesis; selenocysteinyl-tRNA(Sec) from L-seryl-tRNA(Sec) (archaeal/eukaryal route): step 2/2. Converts O-phosphoseryl-tRNA(Sec) to selenocysteinyl-tRNA(Sec) required for selenoprotein biosynthesis. This Methanopyrus kandleri (strain AV19 / DSM 6324 / JCM 9639 / NBRC 100938) protein is O-phosphoseryl-tRNA(Sec) selenium transferase (spcS).